We begin with the raw amino-acid sequence, 342 residues long: Phosphoribosylformylglycinamidine cyclo-ligase (342 aa).

This sequence belongs to the AIR synthase family.

The protein resides in the cytoplasm. It catalyses the reaction 2-formamido-N(1)-(5-O-phospho-beta-D-ribosyl)acetamidine + ATP = 5-amino-1-(5-phospho-beta-D-ribosyl)imidazole + ADP + phosphate + H(+). Its pathway is purine metabolism; IMP biosynthesis via de novo pathway; 5-amino-1-(5-phospho-D-ribosyl)imidazole from N(2)-formyl-N(1)-(5-phospho-D-ribosyl)glycinamide: step 2/2. The polypeptide is Phosphoribosylformylglycinamidine cyclo-ligase (Staphylococcus aureus (strain MSSA476)).